A 529-amino-acid polypeptide reads, in one-letter code: MSNAPFLSEVSKRRTFAIISHPDAGKTTITEKVLLFGRAIQTAGTVKGRGSSQHAKSDWMEMEKERGISVTTSVMQFPYNDCLVNLLDTPGHEDFSEDTYRTLTAVDSCLMVIDAAKGVEDRTRKLMEVTRLRDTPIVTFMNKLDRDIRDPMELLDEVESELNIACAPVSWPIGCGKEFKGVYHIHRDETILYSTGQGHTIQEQRIIKGLDNPDLDAEVGADLAEQLREELELVLGASHEFDQEMFLKGELTPVFFGTALGNFGVDHMLDGLTDWAPAPLPRQANERAVEATEDKFTGFVFKIQANMDPKHRDRIAFMRIVSGTYTQGMKMNHVRLGKQVNISDAVTFMAGDRSRAEAAYAGDIIGLHNHGTIQIGDTFTQGELLKFSGIPNFAPELFRRIRLRDPLKQKQLLKGLVQLSEEGAVQVFRPLQNNDLIVGAVGVLQFDVVVARLKSEYNVEAIYESVNVATARWVECGDAKKLDEFQRKNQTNLALDGGDNLTYIAPTMVNLNLAKERFPEVEFRATREH.

One can recognise a tr-type G domain in the interval 11–280 (SKRRTFAIIS…GLTDWAPAPL (270 aa)). GTP contacts are provided by residues 20–27 (SHPDAGKT), 88–92 (DTPGH), and 142–145 (NKLD).

The protein belongs to the TRAFAC class translation factor GTPase superfamily. Classic translation factor GTPase family. PrfC subfamily.

Its subcellular location is the cytoplasm. Increases the formation of ribosomal termination complexes and stimulates activities of RF-1 and RF-2. It binds guanine nucleotides and has strong preference for UGA stop codons. It may interact directly with the ribosome. The stimulation of RF-1 and RF-2 is significantly reduced by GTP and GDP, but not by GMP. This chain is Peptide chain release factor 3, found in Vibrio vulnificus (strain YJ016).